The following is a 188-amino-acid chain: Fructose-1-phosphate phosphatase YqaB (188 aa).

D11 acts as the Nucleophile in catalysis. D11, D13, and D167 together coordinate Mg(2+). 11 to 13 (DMD) contacts substrate.

It belongs to the HAD-like hydrolase superfamily. CbbY/CbbZ/Gph/YieH family. Mg(2+) serves as cofactor. Requires Mn(2+) as cofactor. Co(2+) is required as a cofactor. The cofactor is Zn(2+).

Functionally, catalyzes strongly the dephosphorylation of fructose-1-phosphate (Fru1P) and slightly the dephosphorylation of 6-phosphogluconate (6P-Glu). It has low beta-phosphoglucomutase activity. This Escherichia coli (strain K12) protein is Fructose-1-phosphate phosphatase YqaB (yqaB).